The chain runs to 407 residues: Lysophospholipid transporter LplT (407 aa).

Helical transmembrane passes span 18–38 (AVIIAQFFSAFGDNALLFATL), 53–73 (FLQMGFVAAYIILAPFVGQIA), 91–111 (AGALLICVGGNPFLGYTLVGV), 139–159 (LMEASTIAAILTGSVAGGVLA), 163–183 (IYGALSICAVAYGIALGANML), 229–249 (WGAGVTLRFLLVLWVPHALGI), 257–277 (LLNAMVAVGIVVGAGAAAKLV), 286–306 (LPAGFLIGVVVVIFTLQHNLM), 310–330 (SLLILLGALGGFFIVPLNALL), 343–365 (AIAVQNLGENGAMLLMLGLYSLV), and 375–395 (IGIGFGVLFALAIALLWVWLI).

The protein belongs to the major facilitator superfamily. LplT (TC 2.A.1.42) family.

The protein resides in the cell inner membrane. In terms of biological role, catalyzes the facilitated diffusion of 2-acyl-glycero-3-phosphoethanolamine (2-acyl-GPE) into the cell. The polypeptide is Lysophospholipid transporter LplT (Pectobacterium carotovorum subsp. carotovorum (strain PC1)).